The sequence spans 71 residues: Plasticin-DA1 (71 aa).

A signal peptide spans 1–22; that stretch reads MAFLKKSLFLVLFLALVPLSIC. Positions 23–42 are excised as a propeptide; it reads EAEKREEENEEKQEDDDESE. A disordered region spans residues 25–45; the sequence is EKREEENEEKQEDDDESEKKR. Over residues 30–40 the composition is skewed to acidic residues; sequence ENEEKQEDDDE. Residue G68 is modified to Glycine amide. The propeptide occupies 70 to 71; it reads ER.

It belongs to the frog skin active peptide (FSAP) family. Plasticin subfamily. Expressed by the skin glands.

The protein resides in the secreted. Its subcellular location is the target cell membrane. Neutral peptide with no antimicrobial activity. Does not permeate bacterial membranes. May act in synergy with cationic peptides by enhancing their activity. Has a moderate hemolytic activity. It interacts with zwitterionic phospholipids (DMPC) without perturbing either the interface or inside of the bilayer, whereas it causes little perturbations at the interface peptide-anionic vesicles (DMPG) as well as in the bilayer alkyl chains. The sequence is that of Plasticin-DA1 from Agalychnis dacnicolor (Giant Mexican leaf frog).